A 361-amino-acid chain; its full sequence is 5-formaminoimidazole-4-carboxamide-1-(beta)-D-ribofuranosyl 5'-monophosphate synthetase (361 aa).

Residues His27 and Ser94 each contribute to the 5-amino-1-(5-phospho-beta-D-ribosyl)imidazole-4-carboxamide site. One can recognise an ATP-grasp domain in the interval 116–348 (RQILRWEAER…MGQRIAKEIK (233 aa)). ATP is bound by residues 146-208 (PDEI…TNYC) and Glu230. Asn258 contacts 5-amino-1-(5-phospho-beta-D-ribosyl)imidazole-4-carboxamide. Mg(2+) contacts are provided by Gln297 and Glu310.

It belongs to the phosphohexose mutase family. It depends on Mg(2+) as a cofactor. Mn(2+) is required as a cofactor.

The catalysed reaction is 5-amino-1-(5-phospho-beta-D-ribosyl)imidazole-4-carboxamide + formate + ATP = 5-formamido-1-(5-phospho-D-ribosyl)imidazole-4-carboxamide + ADP + phosphate. It functions in the pathway purine metabolism; IMP biosynthesis via de novo pathway; 5-formamido-1-(5-phospho-D-ribosyl)imidazole-4-carboxamide from 5-amino-1-(5-phospho-D-ribosyl)imidazole-4-carboxamide (formate route): step 1/1. Functionally, catalyzes the ATP- and formate-dependent formylation of 5-aminoimidazole-4-carboxamide-1-beta-d-ribofuranosyl 5'-monophosphate (AICAR) to 5-formaminoimidazole-4-carboxamide-1-beta-d-ribofuranosyl 5'-monophosphate (FAICAR) in the absence of folates. This is 5-formaminoimidazole-4-carboxamide-1-(beta)-D-ribofuranosyl 5'-monophosphate synthetase from Methanococcus aeolicus (strain ATCC BAA-1280 / DSM 17508 / OCM 812 / Nankai-3).